The chain runs to 342 residues: Protein BASIC PENTACYSTEINE6 (342 aa).

Residues 41-67 (AIQERNLAISEKKAAVAERDMAFLQRD) are a coiled coil. The tract at residues 41 to 76 (AIQERNLAISEKKAAVAERDMAFLQRDTAIAERNNA) is alanine-zipper. Residues 143–199 (REMEPNDGLPTSPPAGSTLESAKPKRGKRVNPKATTQTAANKRGPKNQRKVKKESED) form a disordered region. Residues 164 to 195 (AKPKRGKRVNPKATTQTAANKRGPKNQRKVKK) are required for nucleus and nucleolus localization. The segment covering 185–194 (RGPKNQRKVK) has biased composition (basic residues). The Nuclear localization signal signature appears at 192 to 195 (KVKK).

This sequence belongs to the BBR/BPC family. Homodimer. Heterodimer with BPC4. As to expression, expressed in seedlings, leaves and pistils. Detected in the base of flowers and tips of carpels, in sepal vasculature, in young rosette, in the lateral and tip of primary roots, and in ovule at the exception of the outer integument.

It is found in the nucleus. The protein resides in the nucleolus. Functionally, transcriptional regulator that specifically binds to GA-rich elements (GAGA-repeats) present in regulatory sequences of genes involved in developmental processes. This Arabidopsis thaliana (Mouse-ear cress) protein is Protein BASIC PENTACYSTEINE6 (BPC6).